The chain runs to 187 residues: Threonylcarbamoyl-AMP synthase (187 aa).

One can recognise a YrdC-like domain in the interval 4–187 (NHTDDPFLLD…GHSGQTIRDN (184 aa)). Residues 168–187 (GSRSPSKIRHGHSGQTIRDN) are disordered.

Belongs to the SUA5 family. TsaC subfamily.

Its subcellular location is the cytoplasm. The catalysed reaction is L-threonine + hydrogencarbonate + ATP = L-threonylcarbamoyladenylate + diphosphate + H2O. Its function is as follows. Required for the formation of a threonylcarbamoyl group on adenosine at position 37 (t(6)A37) in tRNAs that read codons beginning with adenine. Catalyzes the conversion of L-threonine, HCO(3)(-)/CO(2) and ATP to give threonylcarbamoyl-AMP (TC-AMP) as the acyladenylate intermediate, with the release of diphosphate. The polypeptide is Threonylcarbamoyl-AMP synthase (Pseudoalteromonas atlantica (strain T6c / ATCC BAA-1087)).